The primary structure comprises 196 residues: Phosphoheptose isomerase (196 aa).

The region spanning 38-196 is the SIS domain; that stretch reads LIAGYRAGAR…VEHALFAPRQ (159 aa). 53 to 55 provides a ligand contact to substrate; the sequence is NGG. Positions 62 and 66 each coordinate Zn(2+). Residues glutamate 66, 95 to 96, 121 to 123, serine 126, and glutamine 173 contribute to the substrate site; these read ND and STS. Zn(2+) contacts are provided by glutamine 173 and histidine 181.

Belongs to the SIS family. GmhA subfamily. It depends on Zn(2+) as a cofactor.

It localises to the cytoplasm. The enzyme catalyses 2 D-sedoheptulose 7-phosphate = D-glycero-alpha-D-manno-heptose 7-phosphate + D-glycero-beta-D-manno-heptose 7-phosphate. It participates in carbohydrate biosynthesis; D-glycero-D-manno-heptose 7-phosphate biosynthesis; D-glycero-alpha-D-manno-heptose 7-phosphate and D-glycero-beta-D-manno-heptose 7-phosphate from sedoheptulose 7-phosphate: step 1/1. Functionally, catalyzes the isomerization of sedoheptulose 7-phosphate in D-glycero-D-manno-heptose 7-phosphate. This Mycobacterium bovis (strain ATCC BAA-935 / AF2122/97) protein is Phosphoheptose isomerase.